The following is an 85-amino-acid chain: MANVTVRNLPDEVHRALRVRAAMHGRSTEAEIRDILETTVRPPERVKLGSLLASIAHEAGGLTDAEAEHFNQLRDKTPAEPMSFE.

Over residues 66-78 (EAEHFNQLRDKTP) the composition is skewed to basic and acidic residues. Residues 66–85 (EAEHFNQLRDKTPAEPMSFE) form a disordered region.

It to P.syringae pv tomato plasmid stability protein StbC.

Involved in plasmid stability. This Sinorhizobium fredii (strain NBRC 101917 / NGR234) protein is Putative plasmid stability protein y4jJ.